Consider the following 73-residue polypeptide: uncharacterized protein (73 aa).

This is an uncharacterized protein from Swinepox virus (strain Kasza) (SWPV).